A 574-amino-acid polypeptide reads, in one-letter code: Desiccation/radiation resistance protein DR_1769 (574 aa).

The signal sequence occupies residues 1–33; that stretch reads MPDPAARRFSLPPFPLAALALSVALLGAPASLA. Low complexity predominate over residues 400–438; the sequence is TAQTQARQAAAAASTSQQPRLPTLAQAPAPTPAPAQTTP. The segment at 400–461 is disordered; it reads TAQTQARQAA…APVPPVASPA (62 aa). Residues 439 to 459 show a composition bias toward pro residues; the sequence is RPQPTPAQPATPAAPVPPVAS.

Functionally, plays an important role in resistance to desiccation and radiation, maybe by protecting genome integrity under extreme conditions. This chain is Desiccation/radiation resistance protein DR_1769, found in Deinococcus radiodurans (strain ATCC 13939 / DSM 20539 / JCM 16871 / CCUG 27074 / LMG 4051 / NBRC 15346 / NCIMB 9279 / VKM B-1422 / R1).